Here is a 556-residue protein sequence, read N- to C-terminus: Delta-1-pyrroline-5-carboxylate dehydrogenase, mitochondrial (556 aa).

The transit peptide at 1-17 (MLRARSAVSQSWKGFKT) directs the protein to the mitochondrion. Residues lysine 226 and 279–283 (GSVPT) contribute to the NAD(+) site. Residue glutamate 307 is the Proton acceptor of the active site. The Nucleophile role is filled by cysteine 341. Glutamate 440 is an NAD(+) binding site. Serine 506 serves as a coordination point for substrate.

Belongs to the aldehyde dehydrogenase family.

It is found in the mitochondrion matrix. It catalyses the reaction L-glutamate 5-semialdehyde + NAD(+) + H2O = L-glutamate + NADH + 2 H(+). Its pathway is amino-acid degradation; L-proline degradation into L-glutamate; L-glutamate from L-proline: step 2/2. In terms of biological role, irreversible conversion of delta-1-pyrroline-5-carboxylate (P5C), derived either from proline or ornithine, to glutamate. This is a necessary step in the pathway interconnecting the urea and tricarboxylic acid cycles. The chain is Delta-1-pyrroline-5-carboxylate dehydrogenase, mitochondrial (aldh4a1) from Danio rerio (Zebrafish).